The following is a 265-amino-acid chain: Undecaprenyl-diphosphatase (265 aa).

8 helical membrane-spanning segments follow: residues 1–21 (MDIFQALFLGLLQGLTEFLPI), 39–59 (QGVGFDLSVHVGTLLAVVLYF), 84–104 (ALAWYLVIGTIPAGLAGLALL), 114–134 (ASVIFFTTLVFGILLGIADWL), 144–164 (LNWKDAVIVGIAQAMALVPGT), 187–207 (FSFLLAIPIIVLASAVKLLEV), 218–238 (GFLIGGVTSFLMAITAIHFFL), and 244–264 (VGMWPYVIYRIILAGVIYAVL).

This sequence belongs to the UppP family.

Its subcellular location is the cell inner membrane. It catalyses the reaction di-trans,octa-cis-undecaprenyl diphosphate + H2O = di-trans,octa-cis-undecaprenyl phosphate + phosphate + H(+). Functionally, catalyzes the dephosphorylation of undecaprenyl diphosphate (UPP). Confers resistance to bacitracin. This Marinobacter nauticus (strain ATCC 700491 / DSM 11845 / VT8) (Marinobacter aquaeolei) protein is Undecaprenyl-diphosphatase.